The sequence spans 566 residues: Pyrophosphate--fructose 6-phosphate 1-phosphotransferase subunit beta 1 (566 aa).

A Phosphoserine modification is found at serine 16. Residue glycine 105 participates in diphosphate binding. Position 199 (aspartate 199) interacts with Mg(2+). Residues 227 to 229 (TID), 266 to 267 (KY), 274 to 276 (MGR), glutamate 335, and 440 to 443 (YEGR) contribute to the substrate site. The active-site Proton acceptor is aspartate 229.

The protein belongs to the phosphofructokinase type A (PFKA) family. PPi-dependent PFK group II subfamily. Clade 'Long' sub-subfamily. Tetramer of two alpha (regulatory) and two beta (catalytic) chains. The cofactor is Mg(2+).

It is found in the cytoplasm. The enzyme catalyses beta-D-fructose 6-phosphate + diphosphate = beta-D-fructose 1,6-bisphosphate + phosphate + H(+). It functions in the pathway carbohydrate degradation; glycolysis; D-glyceraldehyde 3-phosphate and glycerone phosphate from D-glucose: step 3/4. With respect to regulation, allosterically activated by fructose 2,6-bisphosphate. Functionally, catalytic subunit of pyrophosphate--fructose 6-phosphate 1-phosphotransferase. Catalyzes the phosphorylation of D-fructose 6-phosphate, the first committing step of glycolysis. Uses inorganic phosphate (PPi) as phosphoryl donor instead of ATP like common ATP-dependent phosphofructokinases (ATP-PFKs), which renders the reaction reversible, and can thus function both in glycolysis and gluconeogenesis. This chain is Pyrophosphate--fructose 6-phosphate 1-phosphotransferase subunit beta 1, found in Arabidopsis thaliana (Mouse-ear cress).